A 444-amino-acid chain; its full sequence is Transcriptional regulatory protein GlrR (444 aa).

A Response regulatory domain is found at 7 to 121 (HLLLVDDDPG…ALYQAIDDAL (115 aa)). At D56 the chain carries 4-aspartylphosphate. Residues 136 to 366 (IVTRSPLMLR…VNVIEQCVAL (231 aa)) enclose the Sigma-54 factor interaction domain. ATP is bound by residues 164 to 171 (GQSGTGKE) and 227 to 236 (AEGGTLFLDE). Positions 414 to 433 (VTHAARMAGRNRTEFYKLLS) form a DNA-binding region, H-T-H motif.

Phosphorylated by GlrK.

The protein resides in the cytoplasm. Member of the two-component regulatory system GlrR/GlrK that up-regulates transcription of the glmY sRNA when cells enter the stationary growth phase. Regulates glmY transcription by binding to three conserved sites in the purL-glmY intergenic region. The sequence is that of Transcriptional regulatory protein GlrR (glrR) from Escherichia coli (strain K12).